Reading from the N-terminus, the 1909-residue chain is MEDRRPHLEARPRNPPANHRGPMDGELPPRARNQTNNPAATNHAGRHLRASNHPAPFRQREERFRAMGRNPHQGRRNQEGHTSDEARDQRQSQNDTRRRNDDQEGRSHRPPWSSDTFQQWHTPPQKPGEQPQQTKRLGYKFLESLLQKEPSEVAITLATSLGLKELLSHSSMKPSFLQLICQVLRKACSSRIDRQSILHVLGILNNSKFLRVCLPAYVVGMITEPSPDIRNQYPEHISNIISLLQDLVSVFPASSMQETSMLISLLPTSLNALRASGVDIEEETEKNLEKVQAIIKYLQEKRRQGSLRVDTYTLVQAEAEGEVESYRAMPIYPTYNEVHLDEKPFLRPNIISGKYESTAVYLDTHFRLLREDFVRPLREGILKLLQSFEDQCLRKRKFDDIRIYFDARIITPMCSASGIVYKVQFDTKPLKLVRWQNSKRLLYGSLVCMSKDNFETFLFATVSNREHEDLCQGIVQLCFNEQSQQLLADVQPSDSFLMVETTAYFEAYRHVLEGLQEVQEEDVPFQRNIVQCDSYVRNPRYLLMGGRYDFTPLMENPSAMRKSLRGAEALRHPRINVFDFGQWPSKEALKLDDSQMEALQFALTKELAIIQGPPGTGKTYVGLKIVQALLTNKSVWQINTQTFPILVVCYTNHALDQFLEGIYGCQKTSIVRVGGRSNSEILKQFTLRELRNKREFRRTLPMHLRRAYMSIVTEMKESEQKLQEGAQTLECTMHGVLREQHLEKYISAQHWESLMSGPVQDADWVCVQPSKHSMILEWLGLGVGSFTQSASPAGPENTAQAEGEEEEEGEEEGSLIEIAEEADLIQADRVIEEEEVVRPRRRKKEENGTDQELAKMLLAMRLDQEVPGTTAGPEQATEEWETQRGQKKKMKRRVKVELRKLNTMTKAEANGIQDVWQLDLSSRWQLYRLWLQMYQADTRRRILSYERQYRTWAERMAELRLQEDLHILKDAEVVGMTTTGAAKYRQILQQVEPRIVIVEEAAEVLEAHTIATLSKACQHLILIGDHQQLRPSANVYDLAKNFNLEVSLFERLVKVNIPFVRLNYQHRMRPEIARLLTPHIYQDLENHPSVLKYEQIKGVSSNLFFVEHNFPEQEIQEGKSHQNQHEAHFVVELCQYLLCQEYLPSQITILTTYTGQLFCLRKLMPVKTFAGIKVHVVDKYQGEENDIILLSLVRSNQEGKVGFLQIPNRICVALSRAKKGMYCIGNMQMLAKVPLWSRIIHTLRENNQIGPSLRLCCQNHPETHTLVSKASDFQKVPEGGCSRPCEFRLACGHVCTRACHPYDSSHKEFQCMKPCQKVLCQDGHRCPNVCFQECQPCQVKVPKIILKCGHKQMVPCSMSESEFCCQEPCSKILRCGHRCSHLCGEDCVRLCSERVTVELKCGHSQLVKCGNVEDIKYGLPVKCTTKCDTTLDCGHPCPGSCHSCFEGRFHERCQQPCKRLLICSHKCQEPCTGECPPCQRTCQNRCVHSQCKKKCGELCSPCVEPCVWRCQHYQCTKLCSEPCNRPPCYVPCTKLLACGHPCIGLCGEPCPKKCRVCQPDEVTQIFFGFEDEPDARFVQLEDCSHIFEVQALDRFMNEQKDDEVAIKLKVCPICQVPIRKNLRYGTSIKQRLEEIEIVKEKIQGSAGEISTSQEQLKALLKSKTLFHQLRPEEFLILQEKLAQKNLSVKDLGLVENSIRFYDHLANLEGSLEKVHCGEQQSVRTRLEQVHEWLAKKRLSFSSQELSDLQSEIQRLTYLVNLLMRCKMAEKVKGSIAEEVSSIRNILEKTSKFTQEDEQLVQKKMDALKTTLPCSGLGISDEERVQIVTAMGVPRGHWFKCPNGHIYVITECGGAMQRSTCPECQEVIGGENHTLERSNHLASEMDGAQHPAWSNTANNFMNFEEIHRMM.

Basic and acidic residues-rich tracts occupy residues 1-12 and 76-107; these read MEDRRPHLEARP and RNQE…EGRS. Disordered regions lie at residues 1–133 and 787–813; these read MEDR…QPQQ and TQSA…EEEG. Positions 113–122 are enriched in polar residues; the sequence is SSDTFQQWHT. Residues 802–813 are compositionally biased toward acidic residues; sequence EGEEEEEGEEEG. Residues 939–964 are a coiled coil; sequence RRRILSYERQYRTWAERMAELRLQED. NF-X1-type zinc fingers lie at residues 1291–1313, 1375–1393, 1433–1455, and 1463–1480; these read CGHV…QCMK, CGHR…LCSE, CGHP…RCQQ, and CSHK…PCQR. Residues 1733-1764 adopt a coiled-coil conformation; the sequence is LAKKRLSFSSQELSDLQSEIQRLTYLVNLLMR. An RZ-type zinc finger spans residues 1818-1889; the sequence is ISDEERVQIV…LASEMDGAQH (72 aa). Residues C1840, H1844, C1860, and C1863 each coordinate Zn(2+).

It belongs to the ZNFX1 family. As to quaternary structure, interacts with MAVS.

It localises to the mitochondrion outer membrane. It is found in the cytoplasm. Its subcellular location is the stress granule. Its function is as follows. RNA-binding protein that initiates the antiviral response and is required to restrict the replication of RNA viruses. Acts as a double-stranded RNA (dsRNA) sensor that recognizes viral RNA and then interacts with MAVS to initiate the type I interferon response. Also required for immunity against some bacteria, such as mycobacteria. This chain is NFX1-type zinc finger-containing protein 1, found in Mus musculus (Mouse).